The following is a 272-amino-acid chain: Transcription factor PU.1 (272 aa).

Residues serine 126–glutamate 165 form a disordered region. Serine 142 and serine 148 each carry phosphoserine. Residues leucine 155 to glutamate 165 are compositionally biased toward low complexity. Positions isoleucine 172–serine 255 form a DNA-binding region, ETS. Lysine 219, arginine 232, arginine 235, and lysine 245 together coordinate DNA.

Belongs to the ETS family. Binds DNA as a monomer. Can form homomers. Directly interacts with CEBPD/NF-IL6-beta; this interaction does not affect DNA-binding properties of each partner. Interacts with NONO/p54(nrb). Interacts with RUNX1/AML1. Interacts with GFI1; the interaction represses SPI1 transcriptional activity, hence blocks SPI1-induced macrophage differentiation of myeloid progenitor cells. Interacts with CEBPE. Interacts with IRF4/Pip and IRF8. Interacts with JUN. Interacts with RB1. Interacts with TBP. In terms of tissue distribution, expressed in spleen, thymus and bone-marrow macrophages.

Its subcellular location is the nucleus. Its activity is regulated as follows. Transcriptional activity at macrophage-specific genes is inhibited by interaction with GFI1, which results in inhibition of SPI1-induced macrophage differentiation of myeloid progenitor cells, but not that of the granulocyte lineage. In terms of biological role, pioneer transcription factor, which controls hematopoietic cell fate by decompacting stem cell heterochromatin and allowing other transcription factors to enter otherwise inaccessible genomic sites. Once in open chromatin, can directly control gene expression by binding genetic regulatory elements and can also more broadly influence transcription by recruiting transcription factors, such as interferon regulatory factors (IRFs), to otherwise inaccessible genomic regions. Transcriptionally activates genes important for myeloid and lymphoid lineages, such as CSF1R. Transcriptional activation from certain promoters, possibly containing low affinity binding sites, is achieved cooperatively with other transcription factors. FCER1A transactivation is achieved in cooperation with GATA1. May be particularly important for the pro- to pre-B cell transition. Binds (via the ETS domain) onto the purine-rich DNA core sequence 5'-GAGGAA-3', also known as the PU-box. In vitro can bind RNA and interfere with pre-mRNA splicing. This Mus musculus (Mouse) protein is Transcription factor PU.1 (Spi1).